Consider the following 312-residue polypeptide: Olfactory receptor 1D5 (312 aa).

At 1–25 (MDGDNQSENSQFLLLGISESPEQQQ) the chain is on the extracellular side. N-linked (GlcNAc...) asparagine glycosylation is present at N5. A helical transmembrane segment spans residues 26-49 (ILFWMFLSMYLVTVLGNVLIILAI). The Cytoplasmic portion of the chain corresponds to 50–57 (SSDSRLHT). The chain crosses the membrane as a helical span at residues 58–79 (PMYFFLANLSFTDLFFVTNTIP). The Extracellular portion of the chain corresponds to 80–100 (KMLVNLQSQNKAISYAGCLTQ). A disulfide bond links C97 and C189. Residues 101–120 (LYFLVSLVTLDNLILAVMAY) traverse the membrane as a helical segment. Residues 121–140 (DRYVAICCPLHYVTAMSPGL) are Cytoplasmic-facing. A helical transmembrane segment spans residues 141–158 (CVLLLSLCWGLSVFYGLL). At 159–196 (LTLLLTRVTFCGPREIHYLFCDMYILLRLACSNTHIIH) the chain is on the extracellular side. A helical transmembrane segment spans residues 197-220 (TVLVATGCFIFLTPLGFMTTSYVR). At 221-237 (IVRTILQIPSASKKYKA) the chain is on the cytoplasmic side. The helical transmembrane segment at 238-260 (FSTCASHLGVVSLFYGTLAMVYL) threads the bilayer. At 261–271 (QPLHTYSMKDS) the chain is on the extracellular side. The helical transmembrane segment at 272–291 (VATVMYAVVTPMMNPFIHSL) threads the bilayer. Residues 292-312 (RNKDMHGALGRVLRRLFQRPK) lie on the Cytoplasmic side of the membrane.

This sequence belongs to the G-protein coupled receptor 1 family.

It localises to the cell membrane. In terms of biological role, odorant receptor. In Pan troglodytes (Chimpanzee), this protein is Olfactory receptor 1D5 (OR1D5).